Consider the following 672-residue polypeptide: DNA ligase (672 aa).

Residues 32 to 36 (DEKYD), 82 to 83 (SL), and Glu-113 contribute to the NAD(+) site. The active-site N6-AMP-lysine intermediate is Lys-115. 4 residues coordinate NAD(+): Arg-136, Glu-173, Lys-290, and Lys-314. Zn(2+) contacts are provided by Cys-408, Cys-411, Cys-427, and Cys-433. One can recognise a BRCT domain in the interval 592 to 672 (DNNNTLFRKK…EFLNIINVYL (81 aa)).

The protein belongs to the NAD-dependent DNA ligase family. LigA subfamily. Mg(2+) serves as cofactor. Requires Mn(2+) as cofactor.

It catalyses the reaction NAD(+) + (deoxyribonucleotide)n-3'-hydroxyl + 5'-phospho-(deoxyribonucleotide)m = (deoxyribonucleotide)n+m + AMP + beta-nicotinamide D-nucleotide.. Functionally, DNA ligase that catalyzes the formation of phosphodiester linkages between 5'-phosphoryl and 3'-hydroxyl groups in double-stranded DNA using NAD as a coenzyme and as the energy source for the reaction. It is essential for DNA replication and repair of damaged DNA. In Buchnera aphidicola subsp. Baizongia pistaciae (strain Bp), this protein is DNA ligase.